The primary structure comprises 283 residues: Elongation factor Ts (283 aa).

Positions 80-83 (TDFV) are involved in Mg(2+) ion dislocation from EF-Tu.

Belongs to the EF-Ts family.

Its subcellular location is the cytoplasm. Its function is as follows. Associates with the EF-Tu.GDP complex and induces the exchange of GDP to GTP. It remains bound to the aminoacyl-tRNA.EF-Tu.GTP complex up to the GTP hydrolysis stage on the ribosome. The chain is Elongation factor Ts from Haemophilus influenzae (strain PittGG).